The following is a 142-amino-acid chain: Large ribosomal subunit protein uL11 (142 aa).

This sequence belongs to the universal ribosomal protein uL11 family. Part of the ribosomal stalk of the 50S ribosomal subunit. Interacts with L10 and the large rRNA to form the base of the stalk. L10 forms an elongated spine to which L12 dimers bind in a sequential fashion forming a multimeric L10(L12)X complex. Post-translationally, one or more lysine residues are methylated.

In terms of biological role, forms part of the ribosomal stalk which helps the ribosome interact with GTP-bound translation factors. The chain is Large ribosomal subunit protein uL11 from Shewanella oneidensis (strain ATCC 700550 / JCM 31522 / CIP 106686 / LMG 19005 / NCIMB 14063 / MR-1).